Here is a 314-residue protein sequence, read N- to C-terminus: Lipoyl synthase (314 aa).

7 residues coordinate [4Fe-4S] cluster: C55, C60, C66, C81, C85, C88, and S292. In terms of domain architecture, Radical SAM core spans 67–281 (WEDREATFLI…TQYAEGLGFS (215 aa)).

This sequence belongs to the radical SAM superfamily. Lipoyl synthase family. Requires [4Fe-4S] cluster as cofactor.

Its subcellular location is the cytoplasm. It carries out the reaction [[Fe-S] cluster scaffold protein carrying a second [4Fe-4S](2+) cluster] + N(6)-octanoyl-L-lysyl-[protein] + 2 oxidized [2Fe-2S]-[ferredoxin] + 2 S-adenosyl-L-methionine + 4 H(+) = [[Fe-S] cluster scaffold protein] + N(6)-[(R)-dihydrolipoyl]-L-lysyl-[protein] + 4 Fe(3+) + 2 hydrogen sulfide + 2 5'-deoxyadenosine + 2 L-methionine + 2 reduced [2Fe-2S]-[ferredoxin]. The protein operates within protein modification; protein lipoylation via endogenous pathway; protein N(6)-(lipoyl)lysine from octanoyl-[acyl-carrier-protein]: step 2/2. Catalyzes the radical-mediated insertion of two sulfur atoms into the C-6 and C-8 positions of the octanoyl moiety bound to the lipoyl domains of lipoate-dependent enzymes, thereby converting the octanoylated domains into lipoylated derivatives. The protein is Lipoyl synthase of Mycobacterium leprae (strain Br4923).